The sequence spans 142 residues: Large ribosomal subunit protein uL11 (142 aa).

This sequence belongs to the universal ribosomal protein uL11 family. As to quaternary structure, part of the ribosomal stalk of the 50S ribosomal subunit. Interacts with L10 and the large rRNA to form the base of the stalk. L10 forms an elongated spine to which L12 dimers bind in a sequential fashion forming a multimeric L10(L12)X complex. Post-translationally, one or more lysine residues are methylated.

Its function is as follows. Forms part of the ribosomal stalk which helps the ribosome interact with GTP-bound translation factors. In Bartonella tribocorum (strain CIP 105476 / IBS 506), this protein is Large ribosomal subunit protein uL11.